The sequence spans 145 residues: Transcriptional regulator ZitR (145 aa).

The HTH marR-type domain occupies 1–142; that stretch reads MSLANQIDQF…ISQFLSVLTE (142 aa). The Zn(2+) site is built by glutamate 23, cysteine 29, glutamate 40, and histidine 41. A DNA-binding region (H-T-H motif) is located at residues 53–76; that stretch reads NARIAEQLKISPAAVTKALKKLQE. Residues glutamate 106, histidine 107, and histidine 111 each contribute to the Zn(2+) site.

Homodimer.

With respect to regulation, zinc acts as a corepressor and is required for DNA-binding activity. Binds up to two zinc ligands per monomer. Inactive under zinc deprivation. Functionally, zinc-responsive regulator that represses expression of the zit operon in the presence of zinc. Acts by binding two palindromic operator sites overlapping the -35 and -10 boxes of the zit promoter. Could be a sensitive sensor of intracellular zinc to efficiently respond to zinc variations in the environment. This is Transcriptional regulator ZitR (zitR) from Lactococcus lactis subsp. cremoris (strain MG1363).